The following is a 146-amino-acid chain: Ferredoxin-thioredoxin reductase catalytic chain, chloroplastic (146 aa).

A chloroplast-targeting transit peptide spans 1–31 (MNLQAVSCSFGFLSSPLGVTPRTSFRRFVIR). C85 serves as a coordination point for [4Fe-4S] cluster. C87 acts as the Nucleophile in catalysis. C87 and C117 are oxidised to a cystine. Positions 104, 106, and 115 each coordinate [4Fe-4S] cluster.

It belongs to the ferredoxin thioredoxin reductase beta subunit family. As to quaternary structure, heterodimer of subunit A (variable subunit) and subunit B (catalytic subunit). Heterodimeric FTR forms a complex with ferredoxin and thioredoxin. [4Fe-4S] cluster serves as cofactor.

The protein resides in the plastid. The protein localises to the chloroplast. The catalysed reaction is [thioredoxin]-disulfide + 2 reduced [2Fe-2S]-[ferredoxin] + 2 H(+) = [thioredoxin]-dithiol + 2 oxidized [2Fe-2S]-[ferredoxin]. In terms of biological role, catalytic subunit of the ferredoxin-thioredoxin reductase (FTR), which catalyzes the two-electron reduction of thioredoxins by the electrons provided by reduced ferredoxin. The chain is Ferredoxin-thioredoxin reductase catalytic chain, chloroplastic from Arabidopsis thaliana (Mouse-ear cress).